The primary structure comprises 250 residues: MENIIVIKLGGTASDNLTENFFQKITEWQGAEKKIVLVHGGGHYITKMMEALQIPVETKNGLRITNQQALEVTKMVLIGQVQPTITSAFQKRGISVIGLNAGDTGLLEAERLNDRDLGLVGKITKVKTNLIEQLLAGNIITVIAPLGIDNTYNWLNVNADTAACEVASALKAEALYLLTDVPGVKNESEIISEINTTEINKLQTSGVIKGGMIPKLESAAFAAKHGVGQVIITDSLENAGTKIRSKVAIG.

Substrate-binding positions include 41–42 (GG), Arg-63, and Asn-156.

This sequence belongs to the acetylglutamate kinase family. ArgB subfamily.

It is found in the cytoplasm. It carries out the reaction N-acetyl-L-glutamate + ATP = N-acetyl-L-glutamyl 5-phosphate + ADP. It participates in amino-acid biosynthesis; L-arginine biosynthesis; N(2)-acetyl-L-ornithine from L-glutamate: step 2/4. Catalyzes the ATP-dependent phosphorylation of N-acetyl-L-glutamate. The polypeptide is Acetylglutamate kinase (Listeria welshimeri serovar 6b (strain ATCC 35897 / DSM 20650 / CCUG 15529 / CIP 8149 / NCTC 11857 / SLCC 5334 / V8)).